A 306-amino-acid polypeptide reads, in one-letter code: Serine/threonine-protein kinase mug51 (306 aa).

This sequence belongs to the STK19 family.

It catalyses the reaction L-seryl-[protein] + ATP = O-phospho-L-seryl-[protein] + ADP + H(+). The enzyme catalyses L-threonyl-[protein] + ATP = O-phospho-L-threonyl-[protein] + ADP + H(+). Serine/threonine-protein kinase. Has a role in meiosis. This Schizosaccharomyces pombe (strain 972 / ATCC 24843) (Fission yeast) protein is Serine/threonine-protein kinase mug51 (mug51).